Here is a 364-residue protein sequence, read N- to C-terminus: Sorbitol dehydrogenase (364 aa).

Position 54 (C54) interacts with Zn(2+). A substrate-binding site is contributed by Y60. Zn(2+)-binding residues include H79 and E80. Substrate is bound at residue E165. NAD(+) is bound by residues I193, D213, R218, 284 to 286, and 308 to 310; these read VGM and VFR. Residues R310 and Y311 each contribute to the substrate site.

This sequence belongs to the zinc-containing alcohol dehydrogenase family. In terms of assembly, homotetramer. The cofactor is Zn(2+). Mostly expressed in dry seeds and leaves, and, to a lower extent, in roots, stems, flowers and siliques (at protein level).

Its subcellular location is the mitochondrion membrane. The protein localises to the cell membrane. It localises to the cytoplasm. The protein resides in the cytosol. The catalysed reaction is keto-D-fructose + NADH + H(+) = D-sorbitol + NAD(+). It carries out the reaction ribitol + NAD(+) = D-ribulose + NADH + H(+). The enzyme catalyses xylitol + NAD(+) = D-xylulose + NADH + H(+). In terms of biological role, polyol dehydrogenase that catalyzes the NAD(+)-dependent oxidation of various sugar alcohols. Is mostly active with D-sorbitol (D-glucitol), ribitol and xylitol as substrates, leading to the C2-oxidized products D-fructose, D-ribulose and D-xylulose, respectively. To a lesser extent, can also oxidize arabitol, mannitol, lactitol and maltitol in vitro. Is required for sorbitol metabolism. Cannot use NADP(+) as the electron acceptor. The protein is Sorbitol dehydrogenase (SDH) of Arabidopsis thaliana (Mouse-ear cress).